The chain runs to 4069 residues: Cardiomyopathy-associated protein 5 (4069 aa).

23 disordered regions span residues 1–177, 341–387, 442–525, 538–558, 597–705, 732–793, 844–872, 890–948, 979–1009, 1041–1097, 1160–1179, 1205–1237, 1540–1575, 1594–1742, 1757–1809, 1892–1988, 2064–2175, 2187–2259, 2385–2412, 2425–2463, 2494–2527, 2653–2706, and 2750–2862; these read MASR…SQVL, TVPS…DTPA, GLAA…EDSN, ESPL…VEHK, EYSV…VPSL, PSEE…RFTP, SSPD…APPL, LERY…FSPD, TSPS…VSIP, ADEE…PEIP, VKEE…SVPA, RKEE…PESE, KETE…ELEN, PAVE…EEFQ, HPAD…ITEP, ENWM…VKLA, TISS…KKGI, FGSS…SGDG, PQQP…SIIL, SEDR…LENR, TQIT…NERP, QEGN…VGTQ, and SSRD…SDVP. Residues 27-47 show a composition bias toward acidic residues; that stretch reads ETEEESEGEEDETAAESEEEP. The span at 48-62 shows a compositional bias: basic and acidic residues; that stretch reads DSRLSDQDEEGKIKQ. Over residues 84–119 the composition is skewed to polar residues; that stretch reads TWETNSSRSSTPWASEESQTSGVCSREGSTVNSPPG. The segment covering 130-153 has biased composition (basic residues); it reads KVRKRTHKSKHGSPSLRRKGNRKR. Position 155 is a phosphoserine (serine 155). Composition is skewed to polar residues over residues 156–177 and 341–350; these read FESQ…SQVL and TVPSYSSSGR. A compositionally biased stretch (low complexity) spans 489–499; it reads LEPSISLSEPL. Acidic residues predominate over residues 500-510; the sequence is MLEEPEKEEIE. A Phosphoserine modification is found at serine 631. Residues 640 to 659 are compositionally biased toward low complexity; it reads AYSPAAAPTSESSLSPSTTE. Polar residues-rich tracts occupy residues 664 to 673, 692 to 701, and 752 to 775; these read NQSPLFSTVT, PDSTSASEYS, and PSLS…TATS. Positions 1049-1063 are enriched in polar residues; that stretch reads TAATPVSEQFSSSQK. Residues 1085-1094 show a composition bias toward basic and acidic residues; that stretch reads DKSEKAEIKP. The span at 1214-1223 shows a compositional bias: polar residues; it reads QEATAHVSQD. The segment covering 1621–1630 has biased composition (basic and acidic residues); that stretch reads EPEKKDKPHQ. Positions 1639–1662 are enriched in polar residues; the sequence is SEFSSDLGRQSGSIGTKQAKSPIT. 3 stretches are compositionally biased toward basic and acidic residues: residues 1668 to 1687, 1704 to 1714, and 1786 to 1795; these read VLEK…ENRE, LREESQNEEIK, and ILDKLSEETG. Polar residues predominate over residues 1796-1808; the sequence is HPNSSQVLQSITE. Positions 1935 to 1955 are enriched in basic and acidic residues; the sequence is SKDHTCEVRKQVLPHSAEESH. The segment covering 1956-1980 has biased composition (polar residues); sequence LSSQEAVSALDTSSGNTETLSSKSY. The segment covering 2085–2124 has biased composition (basic and acidic residues); the sequence is NEKEAHRSTPPFPEEKPLEESKMVQSKVIDDADEGKKPSP. Residues 2145–2155 show a composition bias toward polar residues; that stretch reads SPESPEVTQNP. Basic and acidic residues-rich tracts occupy residues 2162-2172 and 2232-2250; these read AKPDLPEEKGK and KPAD…DEPR. The segment covering 2387–2399 has biased composition (polar residues); it reads QPKSASSNFASKN. A Phosphoserine modification is found at serine 2404. The segment covering 2441–2461 has biased composition (basic and acidic residues); the sequence is ISEEETKLRSVSPTEKKDNLE. 3 stretches are compositionally biased toward basic and acidic residues: residues 2661 to 2681, 2750 to 2769, and 2777 to 2804; these read KSSR…ESEL, SSRD…ESEL, and ITKE…ETKS. At serine 2813 the chain carries Phosphoserine. The span at 2830 to 2847 shows a compositional bias: basic and acidic residues; sequence AVKKKEMPRSELTPERHT. Residues 2964 to 2988 adopt a coiled-coil conformation; that stretch reads SIDQEESEQMQDKLEYLEEKASFKT. The span at 3015–3031 shows a compositional bias: basic and acidic residues; sequence PLKENKQKETHKTKEEI. Disordered stretches follow at residues 3015-3037, 3119-3156, 3204-3231, 3386-3421, and 3465-3495; these read PLKE…DSET, EKGH…PGMP, KKKE…SDTD, SGAT…QDEY, and EFAS…SSEV. A required for RYR2 clustering region spans residues 3052–3365; that stretch reads YFEKYTLIDY…GSHGNEVGNA (314 aa). The segment covering 3128–3138 has biased composition (polar residues); that stretch reads PETQSQNSADR. Residues 3139–3150 show a composition bias toward basic and acidic residues; that stretch reads NVSKDTKRDVDS. Over residues 3213-3227 the composition is skewed to polar residues; it reads EGDSVNSEASFPSRN. Serine 3228 is modified (phosphoserine). Residues 3477–3489 are compositionally biased toward basic and acidic residues; it reads EQKELGSERKEED. Positions 3517-3544 are amphipathic helix H1; that stretch reads KCPISATDKVFGTHKDHEVSTLDTAISA. Residues 3544 to 3653 are a coiled coil; the sequence is AVKVQLAEFL…REAEELDEAV (110 aa). Residues 3545–3672 are B-box coiled-coil; BBC; the sequence is VKVQLAEFLE…ERLLSAMEST (128 aa). The segment at 3631–3648 is amphipathic helix H2; it reads SMDTAKDTLETIVREAEE. 2 consecutive Fibronectin type-III domains span residues 3704 to 3805 and 3806 to 3898; these read VPQP…TAPS and TPVI…TRGT. The amphipathic helix H3 stretch occupies residues 3751–3767; sequence EVNELVEEYRLTVKESY. The B30.2/SPRY domain occupies 3880 to 4065; that stretch reads NAFGTSEQSE…LHLGIEPPDS (186 aa).

Interacts with PRKAR2A. Interacts with ACTN2 and DTNBP1/dysbindin. Interacts with DES. Interacts with DMD/dystrophin. Interacts with the calcineurin catalytic subunit PPP3CA. Interacts with TTN. Interacts with CAPN3; this interaction, which results in CMYA5 proteolysis, may protect CAPN3 from autolysis. Interacts with FSD2. Identified in a complex composed of FSD2, CMYA5 and RYR2. Phosphorylated by PKA. As to expression, expressed in skeletal muscle; at a strong level and in heart.

Its subcellular location is the nucleus. It localises to the sarcoplasmic reticulum. It is found in the cytoplasm. The protein resides in the perinuclear region. The protein localises to the myofibril. Its subcellular location is the sarcomere. It localises to the m line. Functionally, may serve as an anchoring protein that mediates the subcellular compartmentation of protein kinase A (PKA) via binding to PRKAR2A. May function as a repressor of calcineurin-mediated transcriptional activity. May attenuate calcineurin ability to induce slow-fiber gene program in muscle and may negatively modulate skeletal muscle regeneration. Plays a role in the assembly of ryanodine receptor (RYR2) clusters in striated muscle. The polypeptide is Cardiomyopathy-associated protein 5 (CMYA5) (Homo sapiens (Human)).